A 96-amino-acid chain; its full sequence is Co-chaperonin GroES (96 aa).

Belongs to the GroES chaperonin family. As to quaternary structure, heptamer of 7 subunits arranged in a ring. Interacts with the chaperonin GroEL.

Its subcellular location is the cytoplasm. Together with the chaperonin GroEL, plays an essential role in assisting protein folding. The GroEL-GroES system forms a nano-cage that allows encapsulation of the non-native substrate proteins and provides a physical environment optimized to promote and accelerate protein folding. GroES binds to the apical surface of the GroEL ring, thereby capping the opening of the GroEL channel. This is Co-chaperonin GroES from Streptococcus pyogenes serotype M18 (strain MGAS8232).